Here is an 85-residue protein sequence, read N- to C-terminus: Prosialokinin (85 aa).

A signal peptide spans 1 to 23 (MNMFITVQIVIVLVLAVLSEAAS). Residues 24-74 (LPTATERKDAMDEGPNQSDEPEGSVADPSTKDDDYSDSLKQDEKYYKVRLL) constitute a propeptide that is removed on maturation. Positions 26–61 (TATERKDAMDEGPNQSDEPEGSVADPSTKDDDYSDS) are disordered. Basic and acidic residues predominate over residues 52-61 (STKDDDYSDS). Methionine 84 is modified (methionine amide).

It belongs to the tachykinin family. Expressed exclusively in the medial lobe of female salivary gland. Not detected in female carcass without head and salivary glands. Not detected in male tissues.

Its subcellular location is the secreted. Functionally, vasodilatory peptide. Facilitates mosquito blood feeding on vertebrate host. Induces nitric oxide (NO) release in blood vessels through the activation of the nitric oxide synthase (NOS3). Enhances endothelial permeability and induces edema at the site of inoculation in the host. Induces host smooth muscle contraction. Down-regulates production of Th1 cytokines, such as IL2 and IFN-gamma (IFNG), in mouse splenocytes. Up-regulates production of Th2 cytokines, such as IL4 and IL10, in mouse splenocytes. Promotes recruitment of host leukocytes, especially neutrophils and CD8+ T cells, to the bite site. Modulates cytokine production by host macrophages. Modulates populations of monocytes/macrophages, plasmacytoid dendritic cells, B cells, CD4+ T cells, NK and NKT cells, shifting mammalian immunity towards Th2 responses. In terms of biological role, (Microbial infection) Promotes Semliki Forest virus infection in the host. Its function is as follows. (Microbial infection) Does not affect Zika virus replication in the host. This is Prosialokinin from Aedes aegypti (Yellowfever mosquito).